Reading from the N-terminus, the 769-residue chain is Glutathione biosynthesis bifunctional protein GshAB (769 aa).

Residues 1–347 (MLDSFKENEA…QLADENENNI (347 aa)) form a glutamate--cysteine ligase region. The region spanning 514-768 (KLVLAEHGIR…IGDKILDFLF (255 aa)) is the ATP-grasp domain. 541–599 (SLFEDKQIVVKPKSTNYGWGISIFKNKFTLEDYQEALNIAFSYDSSVIIEEFIPGDEFR) provides a ligand contact to ATP. The Mg(2+) site is built by Asp721, Glu738, and Asn740. Mn(2+) is bound by residues Asp721, Glu738, and Asn740.

In the N-terminal section; belongs to the glutamate--cysteine ligase type 1 family. Type 2 subfamily. In terms of assembly, monomer. Mg(2+) serves as cofactor. Mn(2+) is required as a cofactor.

It carries out the reaction L-cysteine + L-glutamate + ATP = gamma-L-glutamyl-L-cysteine + ADP + phosphate + H(+). The catalysed reaction is gamma-L-glutamyl-L-cysteine + glycine + ATP = glutathione + ADP + phosphate + H(+). Its pathway is sulfur metabolism; glutathione biosynthesis; glutathione from L-cysteine and L-glutamate: step 1/2. It participates in sulfur metabolism; glutathione biosynthesis; glutathione from L-cysteine and L-glutamate: step 2/2. Its function is as follows. Synthesizes glutathione from L-glutamate and L-cysteine via gamma-L-glutamyl-L-cysteine. The sequence is that of Glutathione biosynthesis bifunctional protein GshAB from Listeria innocua serovar 6a (strain ATCC BAA-680 / CLIP 11262).